A 399-amino-acid polypeptide reads, in one-letter code: Putative cytochrome P450 133B2 (399 aa).

C348 is a heme binding site.

This sequence belongs to the cytochrome P450 family. Heme is required as a cofactor.

This chain is Putative cytochrome P450 133B2 (cyp133B2), found in Xylella fastidiosa (strain Temecula1 / ATCC 700964).